The sequence spans 526 residues: Phosphoenolpyruvate carboxylase (526 aa).

It belongs to the PEPCase type 2 family. Homotetramer. Mg(2+) is required as a cofactor.

It carries out the reaction oxaloacetate + phosphate = phosphoenolpyruvate + hydrogencarbonate. Catalyzes the irreversible beta-carboxylation of phosphoenolpyruvate (PEP) to form oxaloacetate (OAA), a four-carbon dicarboxylic acid source for the tricarboxylic acid cycle. The sequence is that of Phosphoenolpyruvate carboxylase from Methanosarcina barkeri (strain Fusaro / DSM 804).